The sequence spans 223 residues: UPF0502 protein Sbal_1765 (223 aa).

This sequence belongs to the UPF0502 family.

The polypeptide is UPF0502 protein Sbal_1765 (Shewanella baltica (strain OS155 / ATCC BAA-1091)).